We begin with the raw amino-acid sequence, 141 residues long: Hemoglobin subunit alpha (141 aa).

A Globin domain is found at 1 to 141; sequence VLSSDDKCNV…VSSVLTSKYR (141 aa). His58 is an O2 binding site. Heme b is bound at residue His87.

The protein belongs to the globin family. As to quaternary structure, heterotetramer of two alpha chains and two beta chains. Red blood cells.

In terms of biological role, involved in oxygen transport from the lung to the various peripheral tissues. This chain is Hemoglobin subunit alpha (HBA), found in Crocodylus niloticus (Nile crocodile).